A 342-amino-acid polypeptide reads, in one-letter code: tRNA (guanine(26)-N(2))-dimethyltransferase (342 aa).

The Trm1 methyltransferase domain maps to 1 to 336; sequence MRITEGSAVI…CPYAEVSEIL (336 aa). The S-adenosyl-L-methionine site is built by Arg35, Arg60, and Glu76.

The protein belongs to the class I-like SAM-binding methyltransferase superfamily. Trm1 family.

It carries out the reaction guanosine(26) in tRNA + 2 S-adenosyl-L-methionine = N(2)-dimethylguanosine(26) in tRNA + 2 S-adenosyl-L-homocysteine + 2 H(+). Functionally, dimethylates a single guanine residue at position 26 of a number of tRNAs using S-adenosyl-L-methionine as donor of the methyl groups. This chain is tRNA (guanine(26)-N(2))-dimethyltransferase, found in Thermoplasma volcanium (strain ATCC 51530 / DSM 4299 / JCM 9571 / NBRC 15438 / GSS1).